Here is a 119-residue protein sequence, read N- to C-terminus: Large ribosomal subunit protein uL18 (119 aa).

The protein belongs to the universal ribosomal protein uL18 family. In terms of assembly, part of the 50S ribosomal subunit; part of the 5S rRNA/L5/L18/L25 subcomplex. Contacts the 5S and 23S rRNAs.

In terms of biological role, this is one of the proteins that bind and probably mediate the attachment of the 5S RNA into the large ribosomal subunit, where it forms part of the central protuberance. The protein is Large ribosomal subunit protein uL18 of Staphylococcus aureus (strain Mu3 / ATCC 700698).